The chain runs to 375 residues: Cobalt-precorrin-5B C(1)-methyltransferase (375 aa).

Belongs to the CbiD family.

The catalysed reaction is Co-precorrin-5B + S-adenosyl-L-methionine = Co-precorrin-6A + S-adenosyl-L-homocysteine. Its pathway is cofactor biosynthesis; adenosylcobalamin biosynthesis; cob(II)yrinate a,c-diamide from sirohydrochlorin (anaerobic route): step 6/10. In terms of biological role, catalyzes the methylation of C-1 in cobalt-precorrin-5B to form cobalt-precorrin-6A. This is Cobalt-precorrin-5B C(1)-methyltransferase from Paracidovorax citrulli (strain AAC00-1) (Acidovorax citrulli).